The primary structure comprises 66 residues: Large ribosomal subunit protein bL35 (66 aa).

It belongs to the bacterial ribosomal protein bL35 family.

The chain is Large ribosomal subunit protein bL35 from Phenylobacterium zucineum (strain HLK1).